A 317-amino-acid chain; its full sequence is Olfactory receptor 8B3 (317 aa).

Over 1–32 (MISMLAGNGSSVTEFVLAGLTDRPELQLPLFY) the chain is Extracellular. Asparagine 8 is a glycosylation site (N-linked (GlcNAc...) asparagine). The helical transmembrane segment at 33 to 53 (LFLIIYIITVVGNLGLIILIG) threads the bilayer. Residues 54-59 (LNPHLH) are Cytoplasmic-facing. Residues 60 to 80 (TPMYYFLFNLSFIDLCYSSVF) traverse the membrane as a helical segment. The Extracellular portion of the chain corresponds to 81 to 97 (SPKMLINFVSEKNSISY). Residues 98-118 (AGCMTQLFLFLFFVISECYML) traverse the membrane as a helical segment. At 119–136 (TSMAYDRYVAICNPLLYK) the chain is on the cytoplasmic side. Residues 137–157 (VTMSPQICSVISFAAYGMGFA) traverse the membrane as a helical segment. Residues 158 to 199 (GSSAHTGCMLRLTFCNVNVINHYLCDILPLLQLSCTSTYVNE) are Extracellular-facing. A helical membrane pass occupies residues 200-220 (VVVLIVVGINITVPSFTILIS). At 221–242 (YVFILANILNIKSTQGRAKAFS) the chain is on the cytoplasmic side. The chain crosses the membrane as a helical span at residues 243–263 (TCSSHIMAISLFFGSAAFMYL). At 264-274 (KYSSGSMEQGK) the chain is on the extracellular side. Residues 275-294 (ISSVFYTNVGPMLNPLIYSL) traverse the membrane as a helical segment. The Cytoplasmic portion of the chain corresponds to 295–317 (RNKDVKVALRKSLIKFREKTDFN).

The protein belongs to the G-protein coupled receptor 1 family.

It is found in the cell membrane. Odorant receptor. This Mus musculus (Mouse) protein is Olfactory receptor 8B3.